The sequence spans 181 residues: ADP-ribosylation factor 1 (181 aa).

A lipid anchor (N-myristoyl glycine) is attached at G2. GTP contacts are provided by residues 25–32 (LDGAGKTT), T48, G70, 126–129 (NKQD), and 160–161 (AT). K127 is covalently cross-linked (Glycyl lysine isopeptide (Lys-Gly) (interchain with G-Cter in ubiquitin)).

It belongs to the small GTPase superfamily. Arf family. As to quaternary structure, interacts with RUD3. Interacts with VPS13 (via C-terminal part); the interaction is direct.

It localises to the golgi apparatus. The enzyme catalyses GTP + H2O = GDP + phosphate + H(+). In terms of biological role, GTP-binding protein involved in Golgi vesicle trafficking. May modulate vesicle budding and uncoating within the Golgi apparatus. May recruit the lipid transfer protein VPS13 to Golgi membranes. Recruits polyadenylate-binding protein PAB1 to COPI vesicles, and this is required for correct localization of the asymmetrically distributed ASH1 mRNA. The protein is ADP-ribosylation factor 1 (ARF1) of Saccharomyces cerevisiae (strain ATCC 204508 / S288c) (Baker's yeast).